A 350-amino-acid chain; its full sequence is Patr class I histocompatibility antigen, alpha chain E (350 aa).

The first 21 residues, 1–21 (MVDGTLLLLLSEALALTQTWA), serve as a signal peptide directing secretion. The alpha-1 stretch occupies residues 22-111 (GSHSLKYFHT…LRGYYNQSEA (90 aa)). Residues 22–305 (GSHSLKYFHT…KPASQPTIPI (284 aa)) are Extracellular-facing. An N-linked (GlcNAc...) asparagine glycan is attached at asparagine 107. Residues 112–203 (GSHTLQWMHG…EKGKETLLHL (92 aa)) form an alpha-2 region. Disulfide bonds link cysteine 122–cysteine 185 and cysteine 224–cysteine 280. Positions 204–295 (EPPKTHVTHH…GLPEPLTLRW (92 aa)) are alpha-3. One can recognise an Ig-like C1-type domain in the interval 206-294 (PKTHVTHHPI…EGLPEPLTLR (89 aa)). The tract at residues 296 to 305 (KPASQPTIPI) is connecting peptide. The chain crosses the membrane as a helical span at residues 306 to 329 (VGIIAGLVLLGSVVSGAVVAAVMW). Over 330–350 (RKKSSGGKGRSYSKAEWSDSA) the chain is Cytoplasmic.

This sequence belongs to the MHC class I family. Heterodimer of an alpha chain and a beta chain (beta-2-microglobulin).

The protein resides in the membrane. In terms of biological role, preferably binds to a peptide derived from the signal sequence of most HLA-A, -B, -C and -G molecules. This is Patr class I histocompatibility antigen, alpha chain E (Patr-E) from Pan troglodytes (Chimpanzee).